The chain runs to 862 residues: DNA topoisomerase 3-beta-1 (862 aa).

Residues 3-153 enclose the Toprim domain; the sequence is TVLMVAEKPS…EKTVFRARFS (151 aa). Residues 171-593 form the Topo IA-type catalytic domain; that stretch reads DHNEALSVDA…HTLDVFKRKF (423 aa). Catalysis depends on Tyr-336, which acts as the O-(5'-phospho-DNA)-tyrosine intermediate. Positions 821–851 are enriched in basic residues; the sequence is PMHRGGPGRRQGRGRGRARRPPGKPNPRRPK. A disordered region spans residues 821–854; it reads PMHRGGPGRRQGRGRGRARRPPGKPNPRRPKDKM.

It belongs to the type IA topoisomerase family. As to expression, isoform 1 is found in testis, heart and skeletal muscle. A 4 kb transcript which probably represents isoform 2 is found in thymus, kidney and pancreas.

The enzyme catalyses ATP-independent breakage of single-stranded DNA, followed by passage and rejoining.. Its function is as follows. Releases the supercoiling and torsional tension of DNA introduced during the DNA replication and transcription by transiently cleaving and rejoining one strand of the DNA duplex. Introduces a single-strand break via transesterification at a target site in duplex DNA. The scissile phosphodiester is attacked by the catalytic tyrosine of the enzyme, resulting in the formation of a DNA-(5'-phosphotyrosyl)-enzyme intermediate and the expulsion of a 3'-OH DNA strand. The free DNA strand than undergoes passage around the unbroken strand thus removing DNA supercoils. Finally, in the religation step, the DNA 3'-OH attacks the covalent intermediate to expel the active-site tyrosine and restore the DNA phosphodiester backbone. Possesses negatively supercoiled DNA relaxing activity. In Homo sapiens (Human), this protein is DNA topoisomerase 3-beta-1 (TOP3B).